The following is a 323-amino-acid chain: MELTGVTSQSIFDDNAADIKLSWVAGLEGADRAFDVEFAREATSAADLVGHLNLIHPNRIQVLGKPEITYYQRLDDETRKRQMGELILLEPPFLVIADGMEPPPDLELRCTRSSTPLFTTPVSSAAVIDHLRLYLSRISAPRVTMHGVFLDILGMGVLIMGESGLGKSELGLELISRGHGLVADDAVDFVRLGPDFIEGRCPPLLQNLLEVRGLGLLDIKTIFGETAVRRKMKIKLVVQLVRRNDGEFERLPLDSQYLDVLGLPIHMVKIQVAAGRNLAVLVEAAVRNTILRLRGIDTLRDFMDRQRAAMQADAVSRGQGRLL.

Catalysis depends on residues H146 and K167. 161–168 (GESGLGKS) lines the ATP pocket. Mg(2+) is bound at residue S168. D185 (proton acceptor; for phosphorylation activity. Proton donor; for dephosphorylation activity) is an active-site residue. Positions 209-218 (LEVRGLGLLD) are important for the catalytic mechanism of both phosphorylation and dephosphorylation. E210 is a Mg(2+) binding site. The active site involves R250. Positions 271-276 (QVAAGR) are important for the catalytic mechanism of dephosphorylation.

It belongs to the HPrK/P family. As to quaternary structure, homohexamer. Requires Mg(2+) as cofactor.

The enzyme catalyses [HPr protein]-L-serine + ATP = [HPr protein]-O-phospho-L-serine + ADP + H(+). It carries out the reaction [HPr protein]-O-phospho-L-serine + phosphate + H(+) = [HPr protein]-L-serine + diphosphate. Functionally, catalyzes the ATP- as well as the pyrophosphate-dependent phosphorylation of a specific serine residue in HPr, a phosphocarrier protein of the phosphoenolpyruvate-dependent sugar phosphotransferase system (PTS). HprK/P also catalyzes the pyrophosphate-producing, inorganic phosphate-dependent dephosphorylation (phosphorolysis) of seryl-phosphorylated HPr (P-Ser-HPr). The chain is HPr kinase/phosphorylase from Cupriavidus necator (strain ATCC 17699 / DSM 428 / KCTC 22496 / NCIMB 10442 / H16 / Stanier 337) (Ralstonia eutropha).